Reading from the N-terminus, the 241-residue chain is UDP-2,3-diacylglucosamine hydrolase (241 aa).

Asp8, His10, Asp41, Asn79, and His114 together coordinate Mn(2+). Position 79-80 (79-80) interacts with substrate; that stretch reads NR. Substrate contacts are provided by Asp122, Lys164, Lys167, and His195. His195 and His197 together coordinate Mn(2+).

It belongs to the LpxH family. Mn(2+) is required as a cofactor.

The protein resides in the cell inner membrane. It catalyses the reaction UDP-2-N,3-O-bis[(3R)-3-hydroxytetradecanoyl]-alpha-D-glucosamine + H2O = 2-N,3-O-bis[(3R)-3-hydroxytetradecanoyl]-alpha-D-glucosaminyl 1-phosphate + UMP + 2 H(+). It participates in glycolipid biosynthesis; lipid IV(A) biosynthesis; lipid IV(A) from (3R)-3-hydroxytetradecanoyl-[acyl-carrier-protein] and UDP-N-acetyl-alpha-D-glucosamine: step 4/6. In terms of biological role, hydrolyzes the pyrophosphate bond of UDP-2,3-diacylglucosamine to yield 2,3-diacylglucosamine 1-phosphate (lipid X) and UMP by catalyzing the attack of water at the alpha-P atom. Involved in the biosynthesis of lipid A, a phosphorylated glycolipid that anchors the lipopolysaccharide to the outer membrane of the cell. The sequence is that of UDP-2,3-diacylglucosamine hydrolase from Aliivibrio fischeri (strain MJ11) (Vibrio fischeri).